A 451-amino-acid chain; its full sequence is Phosphoglucosamine mutase (451 aa).

The active-site Phosphoserine intermediate is Ser-102. 4 residues coordinate Mg(2+): Ser-102, Asp-242, Asp-244, and Asp-246. Residue Ser-102 is modified to Phosphoserine.

The protein belongs to the phosphohexose mutase family. The cofactor is Mg(2+). Post-translationally, activated by phosphorylation.

The enzyme catalyses alpha-D-glucosamine 1-phosphate = D-glucosamine 6-phosphate. Functionally, catalyzes the conversion of glucosamine-6-phosphate to glucosamine-1-phosphate. This is Phosphoglucosamine mutase from Staphylococcus saprophyticus subsp. saprophyticus (strain ATCC 15305 / DSM 20229 / NCIMB 8711 / NCTC 7292 / S-41).